A 382-amino-acid chain; its full sequence is FK506-binding protein 4 (382 aa).

Residues 139–274 form a disordered region; sequence GLEVDEEIES…KEEPKKKITK (136 aa). Over residues 141 to 173 the composition is skewed to acidic residues; it reads EVDEEIESDEEVESDEEIESDEEIESEEEEEEP. Composition is skewed to basic and acidic residues over residues 180-190 and 196-270; these read RPAEEVKEIAS and EKKE…EPKK. The PPIase FKBP-type domain occupies 295–382; it reads GQRVGMRYIG…VFDVKLLSMK (88 aa).

This sequence belongs to the FKBP-type PPIase family. FKBP3/4 subfamily. As to quaternary structure, binds to histones H3 and H4.

Its subcellular location is the nucleus. The catalysed reaction is [protein]-peptidylproline (omega=180) = [protein]-peptidylproline (omega=0). Its activity is regulated as follows. Inhibited by both FK506 and rapamycin. In terms of biological role, PPIase that acts as a histone chaperone. Histone proline isomerase that increases the rate of cis-trans isomerization at prolines on the histone H3 N-terminal tail. Proline isomerization influences H3 methylation thereby regulating gene expression. The sequence is that of FK506-binding protein 4 (FKBP4) from Rhizopus delemar (strain RA 99-880 / ATCC MYA-4621 / FGSC 9543 / NRRL 43880) (Mucormycosis agent).